A 42-amino-acid chain; its full sequence is Photosystem II reaction center protein J (42 aa).

The helical transmembrane segment at 10-30 threads the bilayer; the sequence is IPLWLVLTIIGLAAIALLALF.

Belongs to the PsbJ family. PSII is composed of 1 copy each of membrane proteins PsbA, PsbB, PsbC, PsbD, PsbE, PsbF, PsbH, PsbI, PsbJ, PsbK, PsbL, PsbM, PsbT, PsbY, PsbZ, Psb30/Ycf12, at least 3 peripheral proteins of the oxygen-evolving complex and a large number of cofactors. It forms dimeric complexes.

Its subcellular location is the plastid. The protein resides in the chloroplast thylakoid membrane. In terms of biological role, this protein is a component of the reaction center of photosystem II. Its function is as follows. One of the components of the core complex of photosystem II (PSII). PSII is a light-driven water:plastoquinone oxidoreductase that uses light energy to abstract electrons from H(2)O, generating O(2) and a proton gradient subsequently used for ATP formation. It consists of a core antenna complex that captures photons, and an electron transfer chain that converts photonic excitation into a charge separation. In Euglena gracilis, this protein is Photosystem II reaction center protein J.